Consider the following 158-residue polypeptide: Placenta growth factor (158 aa).

Positions 1–18 (MLVMKLFTCFLQVLAGLA) are cleaved as a signal peptide. N-linked (GlcNAc...) asparagine glycosylation is found at asparagine 29 and asparagine 30. Cystine bridges form between cysteine 48–cysteine 90, cysteine 79–cysteine 125, and cysteine 83–cysteine 127. An N-linked (GlcNAc...) asparagine glycan is attached at asparagine 97. The tract at residues 136-158 (AERRKTKGKRKRSRNSQTEEPHP) is disordered. Basic residues predominate over residues 137–149 (ERRKTKGKRKRSR).

Belongs to the PDGF/VEGF growth factor family. Antiparallel homodimer; disulfide-linked. Also found as heterodimer with VEGFA/VEGF.

The protein resides in the secreted. Its function is as follows. Growth factor active in angiogenesis and endothelial cell growth, stimulating their proliferation and migration. It binds to the receptor FLT1/VEGFR-1. Also promotes cell tumor growth. The protein is Placenta growth factor (Pgf) of Mus musculus (Mouse).